The chain runs to 460 residues: Antizyme inhibitor 2 (460 aa).

The tract at residues 117–140 is necessary for polyamine uptake stimulation; it reads QIAQIKYAAKHGIQLLSFDNEMEL.

The protein belongs to the Orn/Lys/Arg decarboxylase class-II family. ODC antizyme inhibitor subfamily. In terms of assembly, monomer. Interacts with OAZ1, OAZ2 and OAZ3; this interaction disrupts the interaction between the antizyme and ODC1. Does not form a heterodimer with ODC1. Ubiquitinated, leading to its proteasomal degradation; a process that is reduced in presence of antizymes. May also be degraded through the lysosomal degradative pathway in a proteasomal-independent manner. As to expression, expressed in the neocortex, thalamus, hippocampus, cerebellum, medulla oblongata, gray and white matter. Expressed in neurons, oligodendrocytes, basket, Purkinje and pyramidal cells. Expressed in spermatocytes and Leydig cells of the testis. Expressed in luteal theca cells lining corpus luteum cysts and in hilus cells of the ovary. Expressed in primary and neoplastic mast cells (MC) (at protein level). Highly expressed in brain. Also expressed in testis.

It is found in the nucleus. Its subcellular location is the cytoplasm. The protein resides in the perinuclear region. The protein localises to the membrane. It localises to the cytoplasmic vesicle. It is found in the endoplasmic reticulum-Golgi intermediate compartment. Its subcellular location is the golgi apparatus. The protein resides in the cis-Golgi network. The protein localises to the trans-Golgi network. It localises to the cytoplasmic granule. It is found in the cell projection. Its subcellular location is the axon. The protein resides in the dendrite. The protein localises to the perikaryon. In terms of biological role, antizyme inhibitor (AZI) protein that positively regulates ornithine decarboxylase (ODC) activity and polyamine uptake. AZI is an enzymatically inactive ODC homolog that counteracts the negative effect of ODC antizymes (AZs) OAZ1, OAZ2 and OAZ3 on ODC activity by competing with ODC for antizyme-binding. Inhibits antizyme-dependent ODC degradation and releases ODC monomers from their inactive complex with antizymes, leading to formation of the catalytically active ODC homodimer and restoring polyamine production. Participates in the morphological integrity of the trans-Golgi network (TGN) and functions as a regulator of intracellular secretory vesicle trafficking. In Homo sapiens (Human), this protein is Antizyme inhibitor 2 (AZIN2).